The sequence spans 214 residues: Holliday junction branch migration complex subunit RuvA (214 aa).

Residues 1 to 63 (MISSLRGTVL…EDSLTLFGFP (63 aa)) are domain I. The segment at 64–139 (GPDELRAFEL…KLFVTQPRAR (76 aa)) is domain II. Residues 139–143 (RSATS) are flexible linker. Positions 144–214 (AASTVTADVV…AAPTGQAADR (71 aa)) are domain III.

It belongs to the RuvA family. Homotetramer. Forms an RuvA(8)-RuvB(12)-Holliday junction (HJ) complex. HJ DNA is sandwiched between 2 RuvA tetramers; dsDNA enters through RuvA and exits via RuvB. An RuvB hexamer assembles on each DNA strand where it exits the tetramer. Each RuvB hexamer is contacted by two RuvA subunits (via domain III) on 2 adjacent RuvB subunits; this complex drives branch migration. In the full resolvosome a probable DNA-RuvA(4)-RuvB(12)-RuvC(2) complex forms which resolves the HJ.

The protein localises to the cytoplasm. The RuvA-RuvB-RuvC complex processes Holliday junction (HJ) DNA during genetic recombination and DNA repair, while the RuvA-RuvB complex plays an important role in the rescue of blocked DNA replication forks via replication fork reversal (RFR). RuvA specifically binds to HJ cruciform DNA, conferring on it an open structure. The RuvB hexamer acts as an ATP-dependent pump, pulling dsDNA into and through the RuvAB complex. HJ branch migration allows RuvC to scan DNA until it finds its consensus sequence, where it cleaves and resolves the cruciform DNA. In Clavibacter michiganensis subsp. michiganensis (strain NCPPB 382), this protein is Holliday junction branch migration complex subunit RuvA.